Reading from the N-terminus, the 265-residue chain is MTRYILGALIGSGTYGEVYEAIDTETKEKVALKRIRLNEKEGMPGTALREISILKKLSHRNIISLVSIIHTDALLTMVFPFIDYELKKYIGMNTGKNIMELVNQLICGVHYLHRMNVVHRDLKPQNILVTSDGVLKIADFGLSRSLEIRVPPYSSEVVTLWYRSPELLMGSTSYRFYVDIWSLGCIIYEMITLEPLFPGESKENQLTLIRRKAGTRRSLRGMVEQRLAVPKFVTEIIVRCLDFNYNQRITADEIMEILENEYGAC.

Positions 4-263 (YILGALIGSG…IMEILENEYG (260 aa)) constitute a Protein kinase domain. ATP-binding positions include 10–18 (IGSGTYGEV) and K33. D121 (proton acceptor) is an active-site residue.

It belongs to the protein kinase superfamily. CMGC Ser/Thr protein kinase family. CDC2/CDKX subfamily.

The protein localises to the nucleus. It catalyses the reaction L-seryl-[protein] + ATP = O-phospho-L-seryl-[protein] + ADP + H(+). The enzyme catalyses L-threonyl-[protein] + ATP = O-phospho-L-threonyl-[protein] + ADP + H(+). In terms of biological role, may play a role in the control of the eukaryotic cell cycle. In Encephalitozoon cuniculi (strain GB-M1) (Microsporidian parasite), this protein is Probable cell division protein kinase ECU08_0230.